Reading from the N-terminus, the 265-residue chain is Transcriptional activator AggR (265 aa).

In terms of domain architecture, HTH araC/xylS-type spans 164–261 (DKVRNTIEKD…GITPKQFLTY (98 aa)). 2 consecutive DNA-binding regions (H-T-H motif) follow at residues 181-202 (AIIA…ESEY) and 228-251 (ISQI…VKHF).

Homodimer.

Its function is as follows. Transcriptional activator of aggregative adherence fimbria I expression in enteroaggregative E.coli. The protein is Transcriptional activator AggR (aggR) of Escherichia coli.